Reading from the N-terminus, the 501-residue chain is DEAD-box ATP-dependent RNA helicase 36 (501 aa).

The disordered stretch occupies residues M1–D68. Over residues E36–A46 the composition is skewed to pro residues. The span at A59 to D68 shows a compositional bias: low complexity. Positions S77–R105 match the Q motif motif. Residues I108–F281 enclose the Helicase ATP-binding domain. A121 to T128 is a binding site for ATP. A DEAD box motif is present at residues D229–D232. The Helicase C-terminal domain maps to T292–N456. Positions M473–K486 are enriched in basic and acidic residues. The segment at M473 to E501 is disordered. The stretch at D475 to E501 forms a coiled coil. Over residues E487–E501 the composition is skewed to basic residues.

Belongs to the DEAD box helicase family. DDX49/DBP8 subfamily.

The catalysed reaction is ATP + H2O = ADP + phosphate + H(+). The sequence is that of DEAD-box ATP-dependent RNA helicase 36 from Oryza sativa subsp. japonica (Rice).